Here is a 367-residue protein sequence, read N- to C-terminus: Alanine racemase (367 aa).

The active-site Proton acceptor; specific for D-alanine is the K40. K40 is subject to N6-(pyridoxal phosphate)lysine. R136 contributes to the substrate binding site. Residue Y263 is the Proton acceptor; specific for L-alanine of the active site. M310 contacts substrate.

It belongs to the alanine racemase family. It depends on pyridoxal 5'-phosphate as a cofactor.

It catalyses the reaction L-alanine = D-alanine. It participates in amino-acid biosynthesis; D-alanine biosynthesis; D-alanine from L-alanine: step 1/1. Catalyzes the interconversion of L-alanine and D-alanine. May also act on other amino acids. The chain is Alanine racemase (alr) from Streptococcus pneumoniae (strain ATCC 700669 / Spain 23F-1).